The following is a 211-amino-acid chain: Redox-sensing transcriptional repressor Rex (211 aa).

Residues 18–57 (LYYRFIESLHAAGKQRVSSTELSQAVKVDSATIRRDFSYF) constitute a DNA-binding region (H-T-H motif). 92-97 (GVGNLG) is a binding site for NAD(+).

It belongs to the transcriptional regulatory Rex family. In terms of assembly, homodimer.

Its subcellular location is the cytoplasm. Functionally, modulates transcription in response to changes in cellular NADH/NAD(+) redox state. The chain is Redox-sensing transcriptional repressor Rex from Shouchella clausii (strain KSM-K16) (Alkalihalobacillus clausii).